Consider the following 176-residue polypeptide: RNA pyrophosphohydrolase (176 aa).

The region spanning 6–149 (GYRPNVGIVI…KRDVYRRVMK (144 aa)) is the Nudix hydrolase domain. The short motif at 38-59 (GGINPGESAEQAMYRELFEEVG) is the Nudix box element.

The protein belongs to the Nudix hydrolase family. RppH subfamily. The cofactor is a divalent metal cation.

Accelerates the degradation of transcripts by removing pyrophosphate from the 5'-end of triphosphorylated RNA, leading to a more labile monophosphorylated state that can stimulate subsequent ribonuclease cleavage. This Escherichia fergusonii (strain ATCC 35469 / DSM 13698 / CCUG 18766 / IAM 14443 / JCM 21226 / LMG 7866 / NBRC 102419 / NCTC 12128 / CDC 0568-73) protein is RNA pyrophosphohydrolase.